Reading from the N-terminus, the 245-residue chain is tRNA1(Val) (adenine(37)-N6)-methyltransferase (245 aa).

This sequence belongs to the methyltransferase superfamily. tRNA (adenine-N(6)-)-methyltransferase family.

It localises to the cytoplasm. It carries out the reaction adenosine(37) in tRNA1(Val) + S-adenosyl-L-methionine = N(6)-methyladenosine(37) in tRNA1(Val) + S-adenosyl-L-homocysteine + H(+). Its function is as follows. Specifically methylates the adenine in position 37 of tRNA(1)(Val) (anticodon cmo5UAC). The sequence is that of tRNA1(Val) (adenine(37)-N6)-methyltransferase (yfiC) from Escherichia coli (strain K12).